A 254-amino-acid polypeptide reads, in one-letter code: Ribonuclease PH (254 aa).

Phosphate-binding positions include Arg90 and 128-130 (GTR).

The protein belongs to the RNase PH family. As to quaternary structure, homohexameric ring arranged as a trimer of dimers.

It catalyses the reaction tRNA(n+1) + phosphate = tRNA(n) + a ribonucleoside 5'-diphosphate. Functionally, phosphorolytic 3'-5' exoribonuclease that plays an important role in tRNA 3'-end maturation. Removes nucleotide residues following the 3'-CCA terminus of tRNAs; can also add nucleotides to the ends of RNA molecules by using nucleoside diphosphates as substrates, but this may not be physiologically important. Probably plays a role in initiation of 16S rRNA degradation (leading to ribosome degradation) during starvation. This chain is Ribonuclease PH, found in Corynebacterium kroppenstedtii (strain DSM 44385 / JCM 11950 / CIP 105744 / CCUG 35717).